Here is a 1396-residue protein sequence, read N- to C-terminus: DNA-directed RNA polymerase subunit beta' (1396 aa).

Zn(2+) contacts are provided by C72, C74, C87, and C90. Residues D463, D465, and D467 each contribute to the Mg(2+) site. Zn(2+) is bound by residues C814, C889, C896, and C899.

This sequence belongs to the RNA polymerase beta' chain family. As to quaternary structure, the RNAP catalytic core consists of 2 alpha, 1 beta, 1 beta' and 1 omega subunit. When a sigma factor is associated with the core the holoenzyme is formed, which can initiate transcription. Mg(2+) serves as cofactor. The cofactor is Zn(2+).

The enzyme catalyses RNA(n) + a ribonucleoside 5'-triphosphate = RNA(n+1) + diphosphate. Functionally, DNA-dependent RNA polymerase catalyzes the transcription of DNA into RNA using the four ribonucleoside triphosphates as substrates. The chain is DNA-directed RNA polymerase subunit beta' from Chlamydia trachomatis serovar A (strain ATCC VR-571B / DSM 19440 / HAR-13).